The sequence spans 434 residues: ATP-sensitive inward rectifier potassium channel 14 (434 aa).

Over 1–81 (MGLARALRRL…LSDLFTTCVD (81 aa)) the chain is Cytoplasmic. Cys79 bears the S-nitrosocysteine mark. A helical membrane pass occupies residues 82–108 (VRWRWMCLLFSCSFLASWLLFGLTFWL). The Extracellular portion of the chain corresponds to 109-131 (IASLHGDLAAPPPPAPCFSQVAS). Positions 132–148 (FLAAFLFALETQTSIGY) form an intramembrane region, helical; Pore-forming. The Selectivity filter motif lies at 145-150 (SIGYGV). The Extracellular portion of the chain corresponds to 149–157 (GVRSVTEEC). Residues 158-185 (PAAVAAVVLQCIAGCVLDAFVVGAVMAK) traverse the membrane as a helical segment. Residues 186–434 (MAKPKKRNET…TPTLALTLPP (249 aa)) are Cytoplasmic-facing. A disordered region spans residues 398 to 434 (QEEDEEEDTKEGTSAETPDRAASPQALTPTLALTLPP). Positions 407–416 (KEGTSAETPD) are enriched in basic and acidic residues. Positions 418–434 (AASPQALTPTLALTLPP) are enriched in low complexity.

This sequence belongs to the inward rectifier-type potassium channel (TC 1.A.2.1) family. KCNJ14 subfamily. Expressed predominantly in motoneurons of cranial nerve motor nuclei within the general somatic and special visceral motor cell column.

The protein resides in the membrane. It catalyses the reaction K(+)(in) = K(+)(out). Channel activity is regulated by variations of cytosolic pH; channels are activated by alkaline and inhibited by acidic pH values. Inhibited by Ba(2+) and Cs(+) in a voltage-dependent manner; sensitivity to those inhibitors is lower than in other Kir channels. In terms of biological role, inward rectifier potassium channels are characterized by a greater tendency to allow potassium to flow into the cell rather than out of it. Their voltage dependence is regulated by the concentration of extracellular potassium; as external potassium is raised, the voltage range of the channel opening shifts to more positive voltages. The protein is ATP-sensitive inward rectifier potassium channel 14 (Kcnj14) of Rattus norvegicus (Rat).